A 340-amino-acid chain; its full sequence is Tetraacyldisaccharide 4'-kinase (340 aa).

ATP is bound at residue 47–54; it reads SVGGTGKT.

The protein belongs to the LpxK family.

The enzyme catalyses a lipid A disaccharide + ATP = a lipid IVA + ADP + H(+). The protein operates within glycolipid biosynthesis; lipid IV(A) biosynthesis; lipid IV(A) from (3R)-3-hydroxytetradecanoyl-[acyl-carrier-protein] and UDP-N-acetyl-alpha-D-glucosamine: step 6/6. In terms of biological role, transfers the gamma-phosphate of ATP to the 4'-position of a tetraacyldisaccharide 1-phosphate intermediate (termed DS-1-P) to form tetraacyldisaccharide 1,4'-bis-phosphate (lipid IVA). The protein is Tetraacyldisaccharide 4'-kinase of Flavobacterium johnsoniae (strain ATCC 17061 / DSM 2064 / JCM 8514 / BCRC 14874 / CCUG 350202 / NBRC 14942 / NCIMB 11054 / UW101) (Cytophaga johnsonae).